A 21-amino-acid chain; its full sequence is Outer membrane protein P2 (21 aa).

As to quaternary structure, disulfide bond interactions within and between MOMP molecules and other components form high molecular-weight oligomers.

It localises to the cell outer membrane. Its function is as follows. Structural rigidity of the outer membrane of elementary bodies and porin forming, permitting diffusion of solutes through the intracellular reticulate body membrane. Binds carcinoembryonic antigen (CEA). This is Outer membrane protein P2 from Glaesserella parasuis (Haemophilus parasuis).